Here is a 342-residue protein sequence, read N- to C-terminus: Anthranilate phosphoribosyltransferase (342 aa).

Residues glycine 80, 83–84 (GD), threonine 88, 90–93 (NIST), 108–116 (KHGNRAVSS), and serine 120 each bind 5-phospho-alpha-D-ribose 1-diphosphate. Glycine 80 contributes to the anthranilate binding site. Serine 92 serves as a coordination point for Mg(2+). An anthranilate-binding site is contributed by asparagine 111. Anthranilate is bound at residue arginine 166. 2 residues coordinate Mg(2+): aspartate 225 and glutamate 226.

The protein belongs to the anthranilate phosphoribosyltransferase family. As to quaternary structure, homodimer. Mg(2+) is required as a cofactor.

The catalysed reaction is N-(5-phospho-beta-D-ribosyl)anthranilate + diphosphate = 5-phospho-alpha-D-ribose 1-diphosphate + anthranilate. It functions in the pathway amino-acid biosynthesis; L-tryptophan biosynthesis; L-tryptophan from chorismate: step 2/5. Functionally, catalyzes the transfer of the phosphoribosyl group of 5-phosphorylribose-1-pyrophosphate (PRPP) to anthranilate to yield N-(5'-phosphoribosyl)-anthranilate (PRA). The sequence is that of Anthranilate phosphoribosyltransferase from Halalkalibacterium halodurans (strain ATCC BAA-125 / DSM 18197 / FERM 7344 / JCM 9153 / C-125) (Bacillus halodurans).